The chain runs to 233 residues: Protein Mis18-alpha (233 aa).

Residues Ser-36, Ser-39, and Ser-40 each carry the phosphoserine modification. The 99-residue stretch at Pro-80 to Leu-178 folds into the Mis18 domain. Zn(2+)-binding residues include Cys-85, Cys-88, Cys-141, and Cys-144. A Glycyl lysine isopeptide (Lys-Gly) (interchain with G-Cter in SUMO2) cross-link involves residue Lys-162. Position 233 is a phosphoserine (Ser-233).

It belongs to the mis18 family. As to quaternary structure, homodimer, and heterodimer with OIP5/MIS18B. Identified in a complex containing MIS18A, OIP5/MIS18B, MIS18BP1, RBBP7 and RBBP4.

The protein resides in the nucleus. Its subcellular location is the chromosome. The protein localises to the centromere. Its function is as follows. Required for recruitment of CENPA to centromeres and normal chromosome segregation during mitosis. The sequence is that of Protein Mis18-alpha (MIS18A) from Plecturocebus moloch (Dusky titi monkey).